Reading from the N-terminus, the 244-residue chain is Tetraspanin-2A (244 aa).

The Cytoplasmic segment spans residues 1–22; it reads MGIGYGASDEQLEKQIGCVKYT. A helical membrane pass occupies residues 23 to 43; sequence LFCFNIVAWMISTALFALTVW. The Extracellular segment spans residues 44 to 61; it reads LRAEPGFNDWLRILEAQS. Residues 62–82 traverse the membrane as a helical segment; the sequence is FYIGVYVLIGISIVMMAVSFL. The Cytoplasmic portion of the chain corresponds to 83–91; it reads GCLSALMEN. A helical membrane pass occupies residues 92–112; sequence TLALFVFVGTQVFGFIAIVAG. The Extracellular portion of the chain corresponds to 113-206; the sequence is SAVLLQFSTI…TWFFEGKTGW (94 aa). The chain crosses the membrane as a helical span at residues 207-227; the sequence is IVALAMTLGLLNVICAVMSFV. Residues 228 to 244 lie on the Cytoplasmic side of the membrane; sequence LVQAVKKEEEQASNYRR.

The protein belongs to the tetraspanin (TM4SF) family. In terms of assembly, forms a complex with Ssk and mesh.

The protein localises to the apicolateral cell membrane. It is found in the cell junction. The protein resides in the septate junction. Functionally, required for assembly of smooth septate junctions (sSJs), together with Ssk and mesh. Important for barrier function of the midgut epithelium. The sequence is that of Tetraspanin-2A from Drosophila melanogaster (Fruit fly).